A 354-amino-acid polypeptide reads, in one-letter code: tRNA-specific 2-thiouridylase MnmA (354 aa).

ATP-binding positions include 7 to 14 (AMSGGVDS) and M33. C94 functions as the Nucleophile in the catalytic mechanism. Residues C94 and C192 are joined by a disulfide bond. G118 is a binding site for ATP. The tract at residues 141–143 (KDQ) is interaction with tRNA. C192 serves as the catalytic Cysteine persulfide intermediate. An interaction with tRNA region spans residues 296–297 (RY).

Belongs to the MnmA/TRMU family.

It localises to the cytoplasm. It catalyses the reaction S-sulfanyl-L-cysteinyl-[protein] + uridine(34) in tRNA + AH2 + ATP = 2-thiouridine(34) in tRNA + L-cysteinyl-[protein] + A + AMP + diphosphate + H(+). Its function is as follows. Catalyzes the 2-thiolation of uridine at the wobble position (U34) of tRNA, leading to the formation of s(2)U34. This Trichlorobacter lovleyi (strain ATCC BAA-1151 / DSM 17278 / SZ) (Geobacter lovleyi) protein is tRNA-specific 2-thiouridylase MnmA.